A 587-amino-acid polypeptide reads, in one-letter code: Folylpolyglutamate synthase, mitochondrial (587 aa).

A mitochondrion-targeting transit peptide spans 1–42; the sequence is MSWARSRLCSTLSLAAVSARGATTEGAARRGMSAWPAPQEPG. Position 106–109 (106–109) interacts with ATP; it reads GKGS. Ser-130, Glu-200, and His-228 together coordinate Mg(2+). The ATP site is built by Arg-363 and Asp-377. Phosphoserine is present on Ser-539.

This sequence belongs to the folylpolyglutamate synthase family. Monomer. A monovalent cation is required as a cofactor. As to expression, with non-specific probe, highest content in kidney and liver and lowest in spleen, lung and small intestine, and readily detectable in all of the tumors except hepatoma. Isoform 1 and isoform 2 expressed in leukemic cells and isoform 4 and isoform 5 in liver cells. Isoform 1 and isoform 2 exclusively expressed in hepatoma and Lewis lung carcinoma. Isoform 1 and isoform 2 also expressed in bone marrow, small intestine and spleen. Kidney expresses isoform 1, isoform 2, isoform 4 and isoform 5.

Its subcellular location is the mitochondrion inner membrane. The protein resides in the mitochondrion matrix. It is found in the cytoplasm. It catalyses the reaction (6S)-5,6,7,8-tetrahydrofolyl-(gamma-L-Glu)(n) + L-glutamate + ATP = (6S)-5,6,7,8-tetrahydrofolyl-(gamma-L-Glu)(n+1) + ADP + phosphate + H(+). It participates in cofactor biosynthesis; tetrahydrofolylpolyglutamate biosynthesis. Inhibited by ammonium sulfate. Inhibited by pentaglutamate derivative of DDATHF, but isoform 2 is inhibited to a greater extent at lower concentrations of the compound that is isoform 5. Isoform 5 is virtually unaffected by H(4)PteGlu(5) and 5,10-CH(2)-H(4)PteGlu(5) at concentrations that substantially inhibits the activity of isoform 2. Isoform 2 and 5 are equally sensitive to polyglutamates of 10-CHO-H(4)-PteGlu. Catalyzes conversion of folates to polyglutamate derivatives allowing concentration of folate compounds in the cell and the intracellular retention of these cofactors, which are important substrates for most of the folate-dependent enzymes that are involved in one-carbon transfer reactions involved in purine, pyrimidine and amino acid synthesis. Dihydrofolate, tetrahydrofolate, 5,10-methylenetetrahydrofolate, 10-formyltetrahydrofolate and 5-formyltetrahydrofolate are the best substrates. Folic acid and 5-methyltetrahydrofolate can also act as substrates. The protein is Folylpolyglutamate synthase, mitochondrial (Fpgs) of Mus musculus (Mouse).